The primary structure comprises 525 residues: Lysine--tRNA ligase (525 aa).

Residues 40–48 carry the 'HIGH' region motif; that stretch reads ASGIPHMGS. Residues 295–299 carry the 'KMSKS' region motif; it reads KISKS. K298 is an ATP binding site.

Belongs to the class-I aminoacyl-tRNA synthetase family.

It is found in the cytoplasm. The enzyme catalyses tRNA(Lys) + L-lysine + ATP = L-lysyl-tRNA(Lys) + AMP + diphosphate. The protein is Lysine--tRNA ligase (lysS) of Cenarchaeum symbiosum (strain A).